Here is a 768-residue protein sequence, read N- to C-terminus: Dual specificity calcium/calmodulin-dependent 3',5'-cyclic nucleotide phosphodiesterase 1C (768 aa).

Met-1 is subject to N-acetylmethionine. The segment at 183-206 (EKPRFKSIVHAVQAGIFVERMYRR) is calmodulin-binding. The PDEase domain maps to 211–588 (VGLSYPPAVI…ERWRAKVPKE (378 aa)). The Proton donor role is filled by His-288. Residues His-292, His-328, Asp-329, and Asp-436 each contribute to the Zn(2+) site. Asp-329 is a Mg(2+) binding site. 2 disordered regions span residues 513–557 (LIDE…INNS) and 584–719 (KVPK…PPLR). Polar residues-rich tracts occupy residues 516–536 (ETSQTGGTGQRRSSLNSINSS) and 543–557 (VKSSGSEGSAPINNS). Over residues 584 to 614 (KVPKEEKAKKEAEEKARLAAEEKQKEMEAKS) the composition is skewed to basic and acidic residues. Residues 631–641 (ETKGQVNGTRT) are compositionally biased toward polar residues. 2 stretches are compositionally biased toward basic and acidic residues: residues 642-659 (SKGDNPRGKNSKGDKAGE) and 665-692 (DLKDGKNKADKKDHSNTGNESKKADGTK). Positions 698-712 (SPAPSTSSTSRLTLP) are enriched in low complexity.

The protein belongs to the cyclic nucleotide phosphodiesterase family. PDE1 subfamily. In terms of assembly, homodimer. The cofactor is Zn(2+). Mg(2+) serves as cofactor. In terms of tissue distribution, highly expressed in olfactory epithelium and at moderate levels, in cerebellum, as well as weakly in forebrain, testis, heart and lung. In the olfactory epithelium, expressed by sensory neurons, but not epithelial cells.

It localises to the lysosome. The enzyme catalyses a nucleoside 3',5'-cyclic phosphate + H2O = a nucleoside 5'-phosphate + H(+). The catalysed reaction is 3',5'-cyclic GMP + H2O = GMP + H(+). It carries out the reaction 3',5'-cyclic AMP + H2O = AMP + H(+). With respect to regulation, type I PDE are activated by the binding of calmodulin in the presence of Ca(2+). In terms of biological role, calmodulin-dependent cyclic nucleotide phosphodiesterase with a dual specificity for the second messengers cAMP and cGMP, which are key regulators of many important physiological processes. Has a high affinity for both cAMP and cGMP. Modulates the amplitude and duration of the cAMP signal in sensory cilia in response to odorant stimulation, hence contributing to the generation of action potentials. Regulates smooth muscle cell proliferation. Regulates the stability of growth factor receptors, including PDGFRB. The protein is Dual specificity calcium/calmodulin-dependent 3',5'-cyclic nucleotide phosphodiesterase 1C of Rattus norvegicus (Rat).